The sequence spans 184 residues: MNKDNLIENYAVALFNNAMVDNIQDKIFEEITAINRIIIDNFDIREFLFSPIVNKDDKINVVNSLVKNTKFNKIVNNFLLLLVKNSRTAILSNIVDAYNTLLYESKNIKIVQVISANKLQPKEQEWIKSRIEKELNQKTEILFDIDSTIIGGIIIKYDSMLQDYSIKGSLDKITKALKKVRIAA.

This sequence belongs to the ATPase delta chain family. As to quaternary structure, F-type ATPases have 2 components, F(1) - the catalytic core - and F(0) - the membrane proton channel. F(1) has five subunits: alpha(3), beta(3), gamma(1), delta(1), epsilon(1). F(0) has three main subunits: a(1), b(2) and c(10-14). The alpha and beta chains form an alternating ring which encloses part of the gamma chain. F(1) is attached to F(0) by a central stalk formed by the gamma and epsilon chains, while a peripheral stalk is formed by the delta and b chains.

It localises to the cell inner membrane. F(1)F(0) ATP synthase produces ATP from ADP in the presence of a proton or sodium gradient. F-type ATPases consist of two structural domains, F(1) containing the extramembraneous catalytic core and F(0) containing the membrane proton channel, linked together by a central stalk and a peripheral stalk. During catalysis, ATP synthesis in the catalytic domain of F(1) is coupled via a rotary mechanism of the central stalk subunits to proton translocation. In terms of biological role, this protein is part of the stalk that links CF(0) to CF(1). It either transmits conformational changes from CF(0) to CF(1) or is implicated in proton conduction. The polypeptide is ATP synthase subunit delta (Rickettsia felis (strain ATCC VR-1525 / URRWXCal2) (Rickettsia azadi)).